Reading from the N-terminus, the 241-residue chain is 2-C-methyl-D-erythritol 4-phosphate cytidylyltransferase (241 aa).

Belongs to the IspD/TarI cytidylyltransferase family. IspD subfamily. In terms of assembly, homodimer.

The catalysed reaction is 2-C-methyl-D-erythritol 4-phosphate + CTP + H(+) = 4-CDP-2-C-methyl-D-erythritol + diphosphate. It participates in isoprenoid biosynthesis; isopentenyl diphosphate biosynthesis via DXP pathway; isopentenyl diphosphate from 1-deoxy-D-xylulose 5-phosphate: step 2/6. Its function is as follows. Catalyzes the formation of 4-diphosphocytidyl-2-C-methyl-D-erythritol from CTP and 2-C-methyl-D-erythritol 4-phosphate (MEP). This is 2-C-methyl-D-erythritol 4-phosphate cytidylyltransferase from Yersinia pestis.